Reading from the N-terminus, the 66-residue chain is MIVIILLFISIIVFLSVIQPQPSKNKSRQQADSGYFGYSDHSSHHDGCSSDGGFSDSGCGGGGGGD.

Positions 1-25 (MIVIILLFISIIVFLSVIQPQPSKN) are cleaved as a signal peptide. The span at 21-31 (QPSKNKSRQQA) shows a compositional bias: polar residues. Residues 21–66 (QPSKNKSRQQADSGYFGYSDHSSHHDGCSSDGGFSDSGCGGGGGGD) form a disordered region.

This is an uncharacterized protein from Bacillus subtilis (strain 168).